Here is a 256-residue protein sequence, read N- to C-terminus: Ubiquinone/menaquinone biosynthesis C-methyltransferase UbiE (256 aa).

S-adenosyl-L-methionine is bound by residues Thr79, Asp100, and 128-129; that span reads DA.

The protein belongs to the class I-like SAM-binding methyltransferase superfamily. MenG/UbiE family.

The enzyme catalyses a 2-demethylmenaquinol + S-adenosyl-L-methionine = a menaquinol + S-adenosyl-L-homocysteine + H(+). The catalysed reaction is a 2-methoxy-6-(all-trans-polyprenyl)benzene-1,4-diol + S-adenosyl-L-methionine = a 5-methoxy-2-methyl-3-(all-trans-polyprenyl)benzene-1,4-diol + S-adenosyl-L-homocysteine + H(+). It functions in the pathway quinol/quinone metabolism; menaquinone biosynthesis; menaquinol from 1,4-dihydroxy-2-naphthoate: step 2/2. It participates in cofactor biosynthesis; ubiquinone biosynthesis. In terms of biological role, methyltransferase required for the conversion of demethylmenaquinol (DMKH2) to menaquinol (MKH2) and the conversion of 2-polyprenyl-6-methoxy-1,4-benzoquinol (DDMQH2) to 2-polyprenyl-3-methyl-6-methoxy-1,4-benzoquinol (DMQH2). The sequence is that of Ubiquinone/menaquinone biosynthesis C-methyltransferase UbiE from Pseudomonas paraeruginosa (strain DSM 24068 / PA7) (Pseudomonas aeruginosa (strain PA7)).